We begin with the raw amino-acid sequence, 397 residues long: Bifunctional enzyme IspD/IspF (397 aa).

A 2-C-methyl-D-erythritol 4-phosphate cytidylyltransferase region spans residues Met1–Ile236. A 2-C-methyl-D-erythritol 2,4-cyclodiphosphate synthase region spans residues Arg237–Lys397. Residues Asp243 and His245 each contribute to the a divalent metal cation site. Residues Asp243–His245 and His269–Ser270 each bind 4-CDP-2-C-methyl-D-erythritol 2-phosphate. Position 277 (His277) interacts with a divalent metal cation. 4-CDP-2-C-methyl-D-erythritol 2-phosphate-binding positions include Asp291 to Gly293, Thr367 to Glu370, Phe374, and Arg377.

It in the N-terminal section; belongs to the IspD/TarI cytidylyltransferase family. IspD subfamily. This sequence in the C-terminal section; belongs to the IspF family. It depends on a divalent metal cation as a cofactor.

It catalyses the reaction 2-C-methyl-D-erythritol 4-phosphate + CTP + H(+) = 4-CDP-2-C-methyl-D-erythritol + diphosphate. The enzyme catalyses 4-CDP-2-C-methyl-D-erythritol 2-phosphate = 2-C-methyl-D-erythritol 2,4-cyclic diphosphate + CMP. It participates in isoprenoid biosynthesis; isopentenyl diphosphate biosynthesis via DXP pathway; isopentenyl diphosphate from 1-deoxy-D-xylulose 5-phosphate: step 2/6. The protein operates within isoprenoid biosynthesis; isopentenyl diphosphate biosynthesis via DXP pathway; isopentenyl diphosphate from 1-deoxy-D-xylulose 5-phosphate: step 4/6. Bifunctional enzyme that catalyzes the formation of 4-diphosphocytidyl-2-C-methyl-D-erythritol from CTP and 2-C-methyl-D-erythritol 4-phosphate (MEP) (IspD), and catalyzes the conversion of 4-diphosphocytidyl-2-C-methyl-D-erythritol 2-phosphate (CDP-ME2P) to 2-C-methyl-D-erythritol 2,4-cyclodiphosphate (ME-CPP) with a corresponding release of cytidine 5-monophosphate (CMP) (IspF). The protein is Bifunctional enzyme IspD/IspF of Bartonella henselae (strain ATCC 49882 / DSM 28221 / CCUG 30454 / Houston 1) (Rochalimaea henselae).